Consider the following 115-residue polypeptide: Sericin-1 (115 aa).

The interval 1–115 is disordered; it reads GSSGSSGSSG…GGSSSTSSSN (115 aa).

In terms of tissue distribution, produced exclusively in the middle (MSG) section of silk glands.

The protein resides in the secreted. Functionally, provides the silk fibroin thread with a sticky coating. Acts as a cement by sticking silk threads together. The protein is Sericin-1 (SER1) of Galleria mellonella (Greater wax moth).